Reading from the N-terminus, the 241-residue chain is Purine nucleoside phosphorylase DeoD-type (241 aa).

Histidine 5 is an a purine D-ribonucleoside binding site. Phosphate-binding positions include glycine 21, arginine 25, arginine 44, and 88–91 (RVGS). A purine D-ribonucleoside contacts are provided by residues 180–182 (EME) and 204–205 (SD). Residue aspartate 205 is the Proton donor of the active site.

This sequence belongs to the PNP/UDP phosphorylase family. Homohexamer; trimer of homodimers.

It catalyses the reaction a purine D-ribonucleoside + phosphate = a purine nucleobase + alpha-D-ribose 1-phosphate. The enzyme catalyses a purine 2'-deoxy-D-ribonucleoside + phosphate = a purine nucleobase + 2-deoxy-alpha-D-ribose 1-phosphate. Catalyzes the reversible phosphorolytic breakdown of the N-glycosidic bond in the beta-(deoxy)ribonucleoside molecules, with the formation of the corresponding free purine bases and pentose-1-phosphate. This chain is Purine nucleoside phosphorylase DeoD-type, found in Yersinia enterocolitica serotype O:8 / biotype 1B (strain NCTC 13174 / 8081).